A 477-amino-acid polypeptide reads, in one-letter code: Erythritol/L-threitol-binding protein (477 aa).

The segment at residues 1–38 is a signal peptide (tat-type signal); the sequence is MMSRESQPGLHRQLSRRNMLAAMGLAGAAAVSLPVLSA.

It belongs to the bacterial solute-binding protein 1 family. In terms of processing, predicted to be exported by the Tat system. The position of the signal peptide cleavage has not been experimentally proven.

Its function is as follows. Part of an ABC transporter complex involved in erythritol/L-threitol import. Binds erythritol and L-threitol. Functions in the transport for the degradation pathways of erythritol and L-threitol, that allow M.smegmatis to grow on these compounds as the sole carbon source. This is Erythritol/L-threitol-binding protein from Mycolicibacterium smegmatis (strain ATCC 700084 / mc(2)155) (Mycobacterium smegmatis).